The chain runs to 144 residues: Maximins 7/H6 (144 aa).

The first 18 residues, 1–18 (MNFKYIVAVSFLIASAYA), serve as a signal peptide directing secretion. Positions 19-43 (RSEENDEQSLSQRDILEEESLREIR) are excised as a propeptide. Residue N70 is modified to Asparagine amide. Residues 74 to 123 (TAEDHEVMKRLEAVMRDLDSLDYPEEAAERETRGFNQEEIANLFTKKEKR) constitute a propeptide that is removed on maturation. L143 carries the post-translational modification Leucine amide.

This sequence belongs to the bombinin family. In terms of tissue distribution, expressed by the skin glands.

It localises to the secreted. Maximin-7 shows antimicrobial activity against bacteria and against the fungus C.albicans. It has little hemolytic activity. Functionally, maximin-H6 shows antimicrobial activity against bacteria and against the fungus C.albicans. Shows strong hemolytic activity. This is Maximins 7/H6 from Bombina maxima (Giant fire-bellied toad).